The sequence spans 156 residues: ATP synthase subunit b (156 aa).

The helical transmembrane segment at Ala-13–Ile-33 threads the bilayer.

The protein belongs to the ATPase B chain family. In terms of assembly, F-type ATPases have 2 components, F(1) - the catalytic core - and F(0) - the membrane proton channel. F(1) has five subunits: alpha(3), beta(3), gamma(1), delta(1), epsilon(1). F(0) has three main subunits: a(1), b(2) and c(10-14). The alpha and beta chains form an alternating ring which encloses part of the gamma chain. F(1) is attached to F(0) by a central stalk formed by the gamma and epsilon chains, while a peripheral stalk is formed by the delta and b chains.

It is found in the cell inner membrane. F(1)F(0) ATP synthase produces ATP from ADP in the presence of a proton or sodium gradient. F-type ATPases consist of two structural domains, F(1) containing the extramembraneous catalytic core and F(0) containing the membrane proton channel, linked together by a central stalk and a peripheral stalk. During catalysis, ATP synthesis in the catalytic domain of F(1) is coupled via a rotary mechanism of the central stalk subunits to proton translocation. Functionally, component of the F(0) channel, it forms part of the peripheral stalk, linking F(1) to F(0). In Aeromonas salmonicida (strain A449), this protein is ATP synthase subunit b.